The following is a 131-amino-acid chain: uncharacterized protein (131 aa).

This is an uncharacterized protein from Orgyia pseudotsugata multicapsid polyhedrosis virus (OpMNPV).